Here is a 928-residue protein sequence, read N- to C-terminus: Chromatin structure-remodeling complex subunit RSC1 (928 aa).

Bromo domains are found at residues 4–112 and 240–342; these read QDNG…IVHN and RIKN…VRIE. Residues 368–486 form the BAH domain; that stretch reads EKYQIGDWVL…ESDKVFNKIR (119 aa). 4 disordered regions span residues 558 to 586, 598 to 635, 657 to 701, and 871 to 908; these read DDLGEYSTSDDCPRYIIRPNDPPEEGKID, TTSSMPRVNSSSTIRLPTLKQTKSIPSSNFRSSSNTPL, HNLL…KPAS, and IASGDNDGKECDTAEESEDENEDTEDEHEIEDIPTTSA. The segment covering 600-620 has biased composition (polar residues); the sequence is SSMPRVNSSSTIRLPTLKQTK. A compositionally biased stretch (low complexity) spans 621–631; it reads SIPSSNFRSSS. Residues 667-679 are compositionally biased toward polar residues; the sequence is KFQSPSLLEQSSR. Position 670 is a phosphoserine (Ser-670). A compositionally biased stretch (low complexity) spans 692–701; that stretch reads SSTAPKKPAS. Over residues 883-902 the composition is skewed to acidic residues; it reads TAEESEDENEDTEDEHEIED.

It belongs to the RSC1 family. As to quaternary structure, component of the two forms of the RSC complex composed of at least either RSC1 or RSC2, and ARP7, ARP9, LDB7, NPL6, RSC3, RSC30, RSC4, RSC58, RSC6, RSC8, RSC9, SFH1, STH1, HTL1 and probably RTT102. The complexes interact with histone and histone variant components of centromeric chromatin.

It localises to the nucleus. Its function is as follows. Component of the chromatin structure remodeling complex (RSC), which is involved in transcription regulation and nucleosome positioning. RSC is responsible for the transfer of a histone octamer from a nucleosome core particle to naked DNA. The reaction requires ATP and involves an activated RSC-nucleosome intermediate. Remodeling reaction also involves DNA translocation, DNA twist and conformational change. As a reconfigurer of centromeric and flanking nucleosomes, RSC complex is required both for proper kinetochore function in chromosome segregation and, via a PKC1-dependent signaling pathway, for organization of the cellular cytoskeleton. This subunit is involved in meiotic sporulation through regulating IME2 expression. The polypeptide is Chromatin structure-remodeling complex subunit RSC1 (RSC1) (Saccharomyces cerevisiae (strain ATCC 204508 / S288c) (Baker's yeast)).